The sequence spans 145 residues: Basic phospholipase A2 PC16 (145 aa).

The signal sequence occupies residues 1 to 21 (MYPAHLLLLLAVCVSLLGASA). The propeptide occupies 22–27 (IPPLPL). 7 disulfide bridges follow: C38–C98, C54–C144, C56–C72, C71–C125, C78–C118, C87–C111, and C105–C116. Y55, G57, and G59 together coordinate Ca(2+). The active site involves H75. D76 contributes to the Ca(2+) binding site. D119 is an active-site residue.

The protein belongs to the phospholipase A2 family. Group I subfamily. D49 sub-subfamily. The cofactor is Ca(2+).

The protein localises to the secreted. It carries out the reaction a 1,2-diacyl-sn-glycero-3-phosphocholine + H2O = a 1-acyl-sn-glycero-3-phosphocholine + a fatty acid + H(+). Its function is as follows. PLA2 catalyzes the calcium-dependent hydrolysis of the 2-acyl groups in 3-sn-phosphoglycerides. This is Basic phospholipase A2 PC16 from Laticauda laticaudata (Blue-ringed sea krait).